The chain runs to 481 residues: NADH-quinone oxidoreductase subunit N (481 aa).

14 helical membrane-spanning segments follow: residues 11–31, 38–58, 69–89, 107–127, 128–148, 162–182, 203–223, 237–257, 271–291, 299–319, 327–347, 370–390, 401–421, and 457–477; these read AIPE…DLFW, LAAV…VFEM, FVLD…VLMV, VFVL…GGSL, LSVY…VAFY, FVLG…LYGL, LVLV…LGAA, PTVV…ALII, WQQI…VIAI, MLAY…VAGT, FFYT…ILLV, YAFL…TVGF, VAAG…IGAF, and LALL…FYAM.

The protein belongs to the complex I subunit 2 family. NDH-1 is composed of 14 different subunits. Subunits NuoA, H, J, K, L, M, N constitute the membrane sector of the complex.

Its subcellular location is the cell inner membrane. The enzyme catalyses a quinone + NADH + 5 H(+)(in) = a quinol + NAD(+) + 4 H(+)(out). In terms of biological role, NDH-1 shuttles electrons from NADH, via FMN and iron-sulfur (Fe-S) centers, to quinones in the respiratory chain. The immediate electron acceptor for the enzyme in this species is believed to be ubiquinone. Couples the redox reaction to proton translocation (for every two electrons transferred, four hydrogen ions are translocated across the cytoplasmic membrane), and thus conserves the redox energy in a proton gradient. This Acidithiobacillus ferrooxidans (strain ATCC 23270 / DSM 14882 / CIP 104768 / NCIMB 8455) (Ferrobacillus ferrooxidans (strain ATCC 23270)) protein is NADH-quinone oxidoreductase subunit N.